The sequence spans 179 residues: Shikimate kinase (179 aa).

15 to 20 provides a ligand contact to ATP; sequence GAGKTS. Threonine 19 contributes to the Mg(2+) binding site. Residues aspartate 37, arginine 61, and glycine 83 each coordinate substrate. Arginine 122 contributes to the ATP binding site. Residue arginine 142 coordinates substrate.

It belongs to the shikimate kinase family. As to quaternary structure, monomer. It depends on Mg(2+) as a cofactor.

Its subcellular location is the cytoplasm. The catalysed reaction is shikimate + ATP = 3-phosphoshikimate + ADP + H(+). Its pathway is metabolic intermediate biosynthesis; chorismate biosynthesis; chorismate from D-erythrose 4-phosphate and phosphoenolpyruvate: step 5/7. Functionally, catalyzes the specific phosphorylation of the 3-hydroxyl group of shikimic acid using ATP as a cosubstrate. The protein is Shikimate kinase of Coxiella burnetii (strain RSA 331 / Henzerling II).